The chain runs to 369 residues: Choline kinase B2 (369 aa).

This sequence belongs to the choline/ethanolamine kinase family. Requires Mg(2+) as cofactor.

It catalyses the reaction choline + ATP = phosphocholine + ADP + H(+). Its pathway is phospholipid metabolism; phosphatidylcholine biosynthesis; phosphocholine from choline: step 1/1. Functionally, catalyzes the first step in phosphatidylcholine biosynthesis. Phosphorylates choline. The polypeptide is Choline kinase B2 (ckb-2) (Caenorhabditis elegans).